Here is a 348-residue protein sequence, read N- to C-terminus: UDP-glucose 4-epimerase (348 aa).

NAD(+)-binding positions include 12–14 (GYI), 33–37 (DNFHN), 66–67 (DI), Phe-88, and Lys-92. 132–134 (SAT) is a substrate binding site. Tyr-157 functions as the Proton acceptor in the catalytic mechanism. NAD(+) is bound by residues Lys-161 and Tyr-185. Substrate-binding positions include 185 to 187 (YFN), 206 to 208 (NNL), 224 to 226 (NVF), Arg-239, and 300 to 303 (REGD).

This sequence belongs to the NAD(P)-dependent epimerase/dehydratase family. In terms of assembly, homodimer. NAD(+) serves as cofactor.

It catalyses the reaction UDP-alpha-D-glucose = UDP-alpha-D-galactose. It carries out the reaction UDP-N-acetyl-alpha-D-glucosamine = UDP-N-acetyl-alpha-D-galactosamine. The protein operates within carbohydrate metabolism; galactose metabolism. Its function is as follows. Catalyzes two distinct but analogous reactions: the reversible epimerization of UDP-glucose to UDP-galactose and the reversible epimerization of UDP-N-acetylglucosamine to UDP-N-acetylgalactosamine. The reaction with UDP-Gal plays a critical role in the Leloir pathway of galactose catabolism in which galactose is converted to the glycolytic intermediate glucose 6-phosphate. It contributes to the catabolism of dietary galactose and enables the endogenous biosynthesis of both UDP-Gal and UDP-GalNAc when exogenous sources are limited. Both UDP-sugar interconversions are important in the synthesis of glycoproteins and glycolipids. The sequence is that of UDP-glucose 4-epimerase (GALE) from Pongo abelii (Sumatran orangutan).